The primary structure comprises 297 residues: Glucose-6-phosphate 1-epimerase (297 aa).

Substrate contacts are provided by arginine 57, glutamine 81, and arginine 86. Serine 88 is modified (phosphoserine). Residue histidine 159 is part of the active site. Residue aspartate 203 coordinates substrate. Residue glutamate 264 is part of the active site.

The protein belongs to the glucose-6-phosphate 1-epimerase family.

The catalysed reaction is alpha-D-glucose 6-phosphate = beta-D-glucose 6-phosphate. Catalyzes the interconversion between the alpha and beta anomers from at least three hexose 6-phosphate sugars (Glc6P, Gal6P, and Man6P). The polypeptide is Glucose-6-phosphate 1-epimerase (Saccharomyces cerevisiae (strain ATCC 204508 / S288c) (Baker's yeast)).